The chain runs to 239 residues: Probable phosphatase Csac_1188 (239 aa).

Positions 8, 10, 16, 41, 74, 102, 132, 192, and 194 each coordinate Zn(2+).

It belongs to the PHP family. The cofactor is Zn(2+).

This chain is Probable phosphatase Csac_1188, found in Caldicellulosiruptor saccharolyticus (strain ATCC 43494 / DSM 8903 / Tp8T 6331).